A 229-amino-acid polypeptide reads, in one-letter code: Cytochrome c oxidase subunit 2 (229 aa).

Residues 1 to 26 lie on the Mitochondrial intermembrane side of the membrane; it reads MSTWANLGLQDSASPLMEQLIFFHDH. The chain crosses the membrane as a helical span at residues 27-48; that stretch reads ALLILVMITVLVGYLMFMLFFN. Residues 49–62 lie on the Mitochondrial matrix side of the membrane; the sequence is SYVNRFLLHGQLIE. The helical transmembrane segment at 63-82 threads the bilayer; sequence MIWTILPAIILLFIAMPSLR. The Mitochondrial intermembrane segment spans residues 83–229; that stretch reads LLYLLDEINE…IKWISSTVNS (147 aa). Cu cation-binding residues include His161, Cys196, Glu198, Cys200, His204, and Met207. Residue Glu198 participates in Mg(2+) binding.

Belongs to the cytochrome c oxidase subunit 2 family. Component of the cytochrome c oxidase (complex IV, CIV), a multisubunit enzyme composed of a catalytic core of 3 subunits and several supernumerary subunits. The complex exists as a monomer or a dimer and forms supercomplexes (SCs) in the inner mitochondrial membrane with ubiquinol-cytochrome c oxidoreductase (cytochrome b-c1 complex, complex III, CIII). Requires Cu cation as cofactor.

The protein localises to the mitochondrion inner membrane. It catalyses the reaction 4 Fe(II)-[cytochrome c] + O2 + 8 H(+)(in) = 4 Fe(III)-[cytochrome c] + 2 H2O + 4 H(+)(out). Component of the cytochrome c oxidase, the last enzyme in the mitochondrial electron transport chain which drives oxidative phosphorylation. The respiratory chain contains 3 multisubunit complexes succinate dehydrogenase (complex II, CII), ubiquinol-cytochrome c oxidoreductase (cytochrome b-c1 complex, complex III, CIII) and cytochrome c oxidase (complex IV, CIV), that cooperate to transfer electrons derived from NADH and succinate to molecular oxygen, creating an electrochemical gradient over the inner membrane that drives transmembrane transport and the ATP synthase. Cytochrome c oxidase is the component of the respiratory chain that catalyzes the reduction of oxygen to water. Electrons originating from reduced cytochrome c in the intermembrane space (IMS) are transferred via the dinuclear copper A center (CU(A)) of subunit 2 and heme A of subunit 1 to the active site in subunit 1, a binuclear center (BNC) formed by heme A3 and copper B (CU(B)). The BNC reduces molecular oxygen to 2 water molecules using 4 electrons from cytochrome c in the IMS and 4 protons from the mitochondrial matrix. The chain is Cytochrome c oxidase subunit 2 (mt:CoII) from Drosophila lowei (Fruit fly).